Here is a 366-residue protein sequence, read N- to C-terminus: tRNA/tmRNA (uracil-C(5))-methyltransferase (366 aa).

Residues Gln-190, Tyr-218, Asn-223, Glu-239, and Asp-299 each contribute to the S-adenosyl-L-methionine site. Cys-324 (nucleophile) is an active-site residue. Glu-358 functions as the Proton acceptor in the catalytic mechanism.

This sequence belongs to the class I-like SAM-binding methyltransferase superfamily. RNA M5U methyltransferase family. TrmA subfamily.

The enzyme catalyses uridine(54) in tRNA + S-adenosyl-L-methionine = 5-methyluridine(54) in tRNA + S-adenosyl-L-homocysteine + H(+). It catalyses the reaction uridine(341) in tmRNA + S-adenosyl-L-methionine = 5-methyluridine(341) in tmRNA + S-adenosyl-L-homocysteine + H(+). Functionally, dual-specificity methyltransferase that catalyzes the formation of 5-methyluridine at position 54 (m5U54) in all tRNAs, and that of position 341 (m5U341) in tmRNA (transfer-mRNA). The chain is tRNA/tmRNA (uracil-C(5))-methyltransferase from Enterobacter sp. (strain 638).